The primary structure comprises 517 residues: Putative lipase ATG15 (517 aa).

Over 1–6 (MRASTH) the chain is Cytoplasmic. A helical; Signal-anchor for type II membrane protein transmembrane segment spans residues 7–27 (SWLLLVVVLSLSSFTVNAVIL). At 28–517 (EGLIPPRSHL…TNWHFTDETL (490 aa)) the chain is on the lumenal side. Residues Asn187, Asn221, and Asn303 are each glycosylated (N-linked (GlcNAc...) asparagine). Ser319 functions as the Charge relay system in the catalytic mechanism. The disordered stretch occupies residues 466–499 (GWRWPWHRGDSADDDGDSDEDTDEDDKLAVPKAR). The segment covering 477 to 491 (ADDDGDSDEDTDEDD) has biased composition (acidic residues).

It belongs to the AB hydrolase superfamily. Lipase family. As to quaternary structure, binds to both phosphatidylinositol (PI) and phosphatidylinositol 3,5-bisphosphate (PIP2).

The protein resides in the endosome. The protein localises to the multivesicular body membrane. Its subcellular location is the prevacuolar compartment membrane. The catalysed reaction is a triacylglycerol + H2O = a diacylglycerol + a fatty acid + H(+). Lipase which is essential for lysis of subvacuolar cytoplasm to vacuole targeted bodies and intravacuolar autophagic bodies. Involved in the lysis of intravacuolar multivesicular body (MVB) vesicles. The intravacuolar membrane disintegration by ATG15 is critical to life span extension. The protein is Putative lipase ATG15 (ATG15) of Mycosarcoma maydis (Corn smut fungus).